Here is a 186-residue protein sequence, read N- to C-terminus: Sec-independent protein translocase protein TatB (186 aa).

The chain crosses the membrane as a helical span at residues 1 to 21; that stretch reads MFDIGFSELILLMVLGLVVLG. Residues 120–186 form a disordered region; the sequence is NAEKSQNAIS…SKSQSSKTKS (67 aa). Polar residues predominate over residues 177-186; it reads SKSQSSKTKS.

This sequence belongs to the TatB family. As to quaternary structure, the Tat system comprises two distinct complexes: a TatABC complex, containing multiple copies of TatA, TatB and TatC subunits, and a separate TatA complex, containing only TatA subunits. Substrates initially bind to the TatABC complex, which probably triggers association of the separate TatA complex to form the active translocon.

The protein localises to the cell inner membrane. Its function is as follows. Part of the twin-arginine translocation (Tat) system that transports large folded proteins containing a characteristic twin-arginine motif in their signal peptide across membranes. Together with TatC, TatB is part of a receptor directly interacting with Tat signal peptides. TatB may form an oligomeric binding site that transiently accommodates folded Tat precursor proteins before their translocation. The protein is Sec-independent protein translocase protein TatB of Haemophilus influenzae (strain ATCC 51907 / DSM 11121 / KW20 / Rd).